The sequence spans 118 residues: Melanoma antigen recognized by T-cells 1 (118 aa).

Residues 27–47 (AAGIGILTVILGVLLLIGCWY) traverse the membrane as a helical segment. The Cytoplasmic portion of the chain corresponds to 48–118 (CRRRNGYRAL…AEQSPPPYSP (71 aa)). The interval 78 to 118 (GFDHRDSKVSLQEKNCEPVVPNAPPAYEKLSAEQSPPPYSP) is disordered. Ser108 is modified (phosphoserine).

Interacts with PMEL. Interacts with GPR143. Post-translationally, acylated. In terms of tissue distribution, expression is restricted to melanoma and melanocyte cell lines and retina.

The protein localises to the endoplasmic reticulum membrane. Its subcellular location is the golgi apparatus. It is found in the trans-Golgi network membrane. The protein resides in the melanosome. In terms of biological role, involved in melanosome biogenesis by ensuring the stability of GPR143. Plays a vital role in the expression, stability, trafficking, and processing of melanocyte protein PMEL, which is critical to the formation of stage II melanosomes. The sequence is that of Melanoma antigen recognized by T-cells 1 (MLANA) from Homo sapiens (Human).